Reading from the N-terminus, the 132-residue chain is L-ectoine synthase (132 aa).

Belongs to the ectoine synthase family.

It carries out the reaction (2S)-4-acetamido-2-aminobutanoate = L-ectoine + H2O. It functions in the pathway amine and polyamine biosynthesis; ectoine biosynthesis; L-ectoine from L-aspartate 4-semialdehyde: step 3/3. In terms of biological role, catalyzes the circularization of gamma-N-acetyl-alpha,gamma-diaminobutyric acid (ADABA) to ectoine (1,4,5,6-tetrahydro-2-methyl-4-pyrimidine carboxylic acid), which is an excellent osmoprotectant. The polypeptide is L-ectoine synthase (ectC) (Streptomyces anulatus (Streptomyces chrysomallus)).